The chain runs to 164 residues: Phosphopantetheine adenylyltransferase (164 aa).

Ser-9 is a binding site for substrate. Residues 9–10 and His-17 each bind ATP; that span reads SF. Substrate is bound by residues Lys-41, Leu-73, and Lys-87. ATP is bound by residues 88–90, Glu-98, and 123–129; these read GLR and YSYLSSS.

It belongs to the bacterial CoaD family. Homohexamer. Mg(2+) serves as cofactor.

The protein resides in the cytoplasm. It carries out the reaction (R)-4'-phosphopantetheine + ATP + H(+) = 3'-dephospho-CoA + diphosphate. It functions in the pathway cofactor biosynthesis; coenzyme A biosynthesis; CoA from (R)-pantothenate: step 4/5. In terms of biological role, reversibly transfers an adenylyl group from ATP to 4'-phosphopantetheine, yielding dephospho-CoA (dPCoA) and pyrophosphate. This Clostridium botulinum (strain ATCC 19397 / Type A) protein is Phosphopantetheine adenylyltransferase.